Consider the following 235-residue polypeptide: Orotidine 5'-phosphate decarboxylase (235 aa).

Substrate-binding positions include aspartate 12, lysine 34, 61–70 (DMKLLDIDNT), threonine 116, arginine 177, glutamine 186, and arginine 207. The active-site Proton donor is lysine 63.

Belongs to the OMP decarboxylase family. Type 1 subfamily. Homodimer.

The catalysed reaction is orotidine 5'-phosphate + H(+) = UMP + CO2. It participates in pyrimidine metabolism; UMP biosynthesis via de novo pathway; UMP from orotate: step 2/2. Functionally, catalyzes the decarboxylation of orotidine 5'-monophosphate (OMP) to uridine 5'-monophosphate (UMP). The polypeptide is Orotidine 5'-phosphate decarboxylase (Agrobacterium fabrum (strain C58 / ATCC 33970) (Agrobacterium tumefaciens (strain C58))).